The primary structure comprises 428 residues: Light-independent protochlorophyllide reductase subunit N (428 aa).

Residues Cys31, Cys56, and Cys117 each contribute to the [4Fe-4S] cluster site.

This sequence belongs to the BchN/ChlN family. Protochlorophyllide reductase is composed of three subunits; BchL, BchN and BchB. Forms a heterotetramer of two BchB and two BchN subunits. The cofactor is [4Fe-4S] cluster.

It catalyses the reaction chlorophyllide a + oxidized 2[4Fe-4S]-[ferredoxin] + 2 ADP + 2 phosphate = protochlorophyllide a + reduced 2[4Fe-4S]-[ferredoxin] + 2 ATP + 2 H2O. Its pathway is porphyrin-containing compound metabolism; bacteriochlorophyll biosynthesis (light-independent). In terms of biological role, component of the dark-operative protochlorophyllide reductase (DPOR) that uses Mg-ATP and reduced ferredoxin to reduce ring D of protochlorophyllide (Pchlide) to form chlorophyllide a (Chlide). This reaction is light-independent. The NB-protein (BchN-BchB) is the catalytic component of the complex. In Rhodopseudomonas palustris (strain BisB18), this protein is Light-independent protochlorophyllide reductase subunit N.